We begin with the raw amino-acid sequence, 535 residues long: Light-independent protochlorophyllide reductase subunit B (535 aa).

Aspartate 36 contributes to the [4Fe-4S] cluster binding site. The active-site Proton donor is the aspartate 292. Residue 428 to 429 (GL) participates in substrate binding. Residues 447–483 (SDDAAKAEPDQPVSNAHGHTESKTVSQGEPIASDEGG) form a disordered region.

This sequence belongs to the ChlB/BchB/BchZ family. In terms of assembly, protochlorophyllide reductase is composed of three subunits; BchL, BchN and BchB. Forms a heterotetramer of two BchB and two BchN subunits. [4Fe-4S] cluster is required as a cofactor.

The catalysed reaction is chlorophyllide a + oxidized 2[4Fe-4S]-[ferredoxin] + 2 ADP + 2 phosphate = protochlorophyllide a + reduced 2[4Fe-4S]-[ferredoxin] + 2 ATP + 2 H2O. The protein operates within porphyrin-containing compound metabolism; bacteriochlorophyll biosynthesis (light-independent). Component of the dark-operative protochlorophyllide reductase (DPOR) that uses Mg-ATP and reduced ferredoxin to reduce ring D of protochlorophyllide (Pchlide) to form chlorophyllide a (Chlide). This reaction is light-independent. The NB-protein (BchN-BchB) is the catalytic component of the complex. This chain is Light-independent protochlorophyllide reductase subunit B, found in Chlorobium phaeobacteroides (strain DSM 266 / SMG 266 / 2430).